Reading from the N-terminus, the 125-residue chain is Large ribosomal subunit protein bL12 (125 aa).

This sequence belongs to the bacterial ribosomal protein bL12 family. Homodimer. Part of the ribosomal stalk of the 50S ribosomal subunit. Forms a multimeric L10(L12)X complex, where L10 forms an elongated spine to which 2 to 4 L12 dimers bind in a sequential fashion. Binds GTP-bound translation factors.

Its function is as follows. Forms part of the ribosomal stalk which helps the ribosome interact with GTP-bound translation factors. Is thus essential for accurate translation. This is Large ribosomal subunit protein bL12 from Porphyromonas gingivalis (strain ATCC 33277 / DSM 20709 / CIP 103683 / JCM 12257 / NCTC 11834 / 2561).